Consider the following 548-residue polypeptide: Glucose-6-phosphate isomerase (548 aa).

The active-site Proton donor is the Glu353. Catalysis depends on residues His384 and Lys512.

It belongs to the GPI family.

It is found in the cytoplasm. The enzyme catalyses alpha-D-glucose 6-phosphate = beta-D-fructose 6-phosphate. Its pathway is carbohydrate biosynthesis; gluconeogenesis. The protein operates within carbohydrate degradation; glycolysis; D-glyceraldehyde 3-phosphate and glycerone phosphate from D-glucose: step 2/4. Functionally, catalyzes the reversible isomerization of glucose-6-phosphate to fructose-6-phosphate. In Chlorobium chlorochromatii (strain CaD3), this protein is Glucose-6-phosphate isomerase.